The following is a 143-amino-acid chain: Transcriptional regulator MraZ (143 aa).

SpoVT-AbrB domains lie at 5–47 and 76–119; these read THSP…PIRE and ASNE…DAQT.

Belongs to the MraZ family. In terms of assembly, forms oligomers.

It is found in the cytoplasm. The protein resides in the nucleoid. This is Transcriptional regulator MraZ from Thermobifida fusca (strain YX).